Here is a 123-residue protein sequence, read N- to C-terminus: Small ribosomal subunit protein uS12 (123 aa).

Positions 1 to 29 are disordered; the sequence is MPTINQLVRKGRVPQKAKSKVPAMEQNPQ. The span at 9 to 19 shows a compositional bias: basic residues; the sequence is RKGRVPQKAKS. D89 carries the 3-methylthioaspartic acid modification.

Belongs to the universal ribosomal protein uS12 family. In terms of assembly, part of the 30S ribosomal subunit. Contacts proteins S8 and S17. May interact with IF1 in the 30S initiation complex.

Its function is as follows. With S4 and S5 plays an important role in translational accuracy. Functionally, interacts with and stabilizes bases of the 16S rRNA that are involved in tRNA selection in the A site and with the mRNA backbone. Located at the interface of the 30S and 50S subunits, it traverses the body of the 30S subunit contacting proteins on the other side and probably holding the rRNA structure together. The combined cluster of proteins S8, S12 and S17 appears to hold together the shoulder and platform of the 30S subunit. The sequence is that of Small ribosomal subunit protein uS12 from Erythrobacter litoralis (strain HTCC2594).